The chain runs to 523 residues: AarF domain-containing protein kinase 1 (523 aa).

Residues 148–484 (EFEEKPLGAA…SLWSYIHISL (337 aa)) form the Protein kinase domain. ATP is bound by residues 154–162 (LGAASLAQV) and Lys-176. Asp-308 functions as the Proton acceptor in the catalytic mechanism.

Belongs to the protein kinase superfamily. ADCK protein kinase family.

Its subcellular location is the mitochondrion. Appears to be essential for maintaining mitochondrial cristae formation and mitochondrial function by acting via YME1L1 in a kinase-independent manner to regulate essential mitochondrial structural proteins OPA1 and IMMT. The action of this enzyme is not yet clear. It is not known if it has protein kinase activity and what type of substrate it would phosphorylate (Ser, Thr or Tyr). In Xenopus tropicalis (Western clawed frog), this protein is AarF domain-containing protein kinase 1 (adck1).